Reading from the N-terminus, the 274-residue chain is tRNA pseudouridine synthase A (274 aa).

Catalysis depends on aspartate 57, which acts as the Nucleophile. A substrate-binding site is contributed by tyrosine 115.

The protein belongs to the tRNA pseudouridine synthase TruA family. As to quaternary structure, homodimer.

The catalysed reaction is uridine(38/39/40) in tRNA = pseudouridine(38/39/40) in tRNA. In terms of biological role, formation of pseudouridine at positions 38, 39 and 40 in the anticodon stem and loop of transfer RNAs. The sequence is that of tRNA pseudouridine synthase A from Frankia casuarinae (strain DSM 45818 / CECT 9043 / HFP020203 / CcI3).